We begin with the raw amino-acid sequence, 841 residues long: Putative helicase R592 (841 aa).

Positions S72–Q309 constitute a Helicase ATP-binding domain. Residue D85 to T92 participates in ATP binding. Basic residues predominate over residues K195–G205. Residues K195 to D215 are disordered. Residues S206 to D215 are compositionally biased toward polar residues. The DEAD box motif lies at D266 to D269. Residues Q413–C450 adopt a coiled-coil conformation. Residues C451–R491 form an RING-type; degenerate zinc finger. One can recognise a Helicase C-terminal domain in the interval V531 to N682. A disordered region spans residues P678–V841. Positions L681–V697 are enriched in acidic residues. The segment covering E698–S725 has biased composition (basic and acidic residues). The segment covering S726–V749 has biased composition (basic residues). 2 stretches are compositionally biased toward acidic residues: residues D765–D774 and S782–I804. Composition is skewed to basic residues over residues K809–K821 and T828–V841.

In Acanthamoeba polyphaga mimivirus (APMV), this protein is Putative helicase R592.